The chain runs to 729 residues: MLYQSETLQLHWLENGIAELVFDAPGSVNKLDTQTVANLGEALVVLEKQSELKGLLLRSAKAAFIVGADITEFLSLFNEPPEKLHQWLVFANDIFNRLEDLPVPTIAAINGYALGGGCECILATDFRVASPEARIGLPETKLGIMPGFGGSVRLPRLLGADSALEIIAAGKDIIAKDALKVGLVDAVVAPEKLVDAALSILNQAIDGKLDWQAARRPKLEPLKLNPTEAAMCFTIAKGMVMQVAGKHYPAPLTAVKTIEAAAKFGRAEALILETNSFVPLAGSNEARALVGIFLNDQYVKGQAKKLSKGVSAPKQAAVLGAGIMGGGIAYQSALKGVPVIMKDINDKSLTLGMNEAAKLLNKQLERGKIDGLKMANILATIQPTLDYAGIERAQVIVEAVVENPKVKAAVLAEVETLIGEETVLASNTSTIPIDQLAKSLKRPENFCGMHFFNPVHRMPLVEIIRGTKTSDKTIAAVVAYATQMGKTPIVVNDCPGFFVNRVLFPYLAGFGMLVRDGADFRQIDKVMEKQFGWPMGPAYLLDVVGIDTAHHAQAVMAVGFPERMNKDYRDAVDVMFDNQRFGQKNGQGFYRYTQDTKGKPRKENDEQVDALLAQVSQPLQKFSDDDIIARTMIPMINEVVRCLEEGIIASPAEGDMALVYGLGFPPFHGGVFRYLDTIGSANYVEMAQRYTHLGALYQVPPGLRAKAEHNESYYPVAAALLDVSISQPA.

The segment at 1-189 (MLYQSETLQL…KVGLVDAVVA (189 aa)) is enoyl-CoA hydratase/isomerase. Asp-296 serves as a coordination point for substrate. The 3-hydroxyacyl-CoA dehydrogenase stretch occupies residues 311–729 (SAPKQAAVLG…LLDVSISQPA (419 aa)). NAD(+) contacts are provided by residues Met-324, Asp-343, 400–402 (VVE), Lys-407, and Ser-429. Catalysis depends on His-450, which acts as the For 3-hydroxyacyl-CoA dehydrogenase activity. An NAD(+)-binding site is contributed by Asn-453. Residues Asn-500 and Tyr-660 each coordinate substrate.

The protein in the N-terminal section; belongs to the enoyl-CoA hydratase/isomerase family. In the C-terminal section; belongs to the 3-hydroxyacyl-CoA dehydrogenase family. In terms of assembly, heterotetramer of two alpha chains (FadB) and two beta chains (FadA).

The enzyme catalyses a (3S)-3-hydroxyacyl-CoA + NAD(+) = a 3-oxoacyl-CoA + NADH + H(+). It carries out the reaction a (3S)-3-hydroxyacyl-CoA = a (2E)-enoyl-CoA + H2O. It catalyses the reaction a 4-saturated-(3S)-3-hydroxyacyl-CoA = a (3E)-enoyl-CoA + H2O. The catalysed reaction is (3S)-3-hydroxybutanoyl-CoA = (3R)-3-hydroxybutanoyl-CoA. The enzyme catalyses a (3Z)-enoyl-CoA = a 4-saturated (2E)-enoyl-CoA. It carries out the reaction a (3E)-enoyl-CoA = a 4-saturated (2E)-enoyl-CoA. It participates in lipid metabolism; fatty acid beta-oxidation. Involved in the aerobic and anaerobic degradation of long-chain fatty acids via beta-oxidation cycle. Catalyzes the formation of 3-oxoacyl-CoA from enoyl-CoA via L-3-hydroxyacyl-CoA. It can also use D-3-hydroxyacyl-CoA and cis-3-enoyl-CoA as substrate. This chain is Fatty acid oxidation complex subunit alpha, found in Yersinia enterocolitica serotype O:8 / biotype 1B (strain NCTC 13174 / 8081).